We begin with the raw amino-acid sequence, 506 residues long: MVTPTKTYRSLAILGTASDVGKSIVATALCRIFRNAGIDVAPYKAQNMSNNSGVTPDGLEIGRAQIAQAEAACVVPTADMNPVLLKPNTDIGAQVVLQGRVCSNESAQGYFRDTSRWAEAARESLLRLKQKHELLVIEGAGSCAEMNLYPRDFVNFRTAREADAAVILVADIDRGGVFAQVVGTLAVIPPEDRALVKGVIINRFRGDSELFREGITMLEEMSGVPVLGVIPYFRHFAIDAEDAVPLSAKVDPAQEPETGKVGVAAIYFPHISNFTDLSPLEHDPSVTLHYLHHPKPLSAYKVLILPGSKNVRGDYAWLQQMGWEKEIRAFREAGGLVIGICGGYQMLGCSIADPYGVEGESGTTQTLGLLETETLLEQEKYLANSEGVLVGTSIKAFGYEIHNGRTTVGANCHPLMNIVARNNHPESDVDGVVSADGRVIGTYFHGIFNEPAVKQWFLQQADSTYTLQPHERGRQESYELLADHFRQHLDVNKLFELIDYEQSLLP.

One can recognise a GATase cobBQ-type domain in the interval 260–453; it reads KVGVAAIYFP…FHGIFNEPAV (194 aa). Cysteine 341 functions as the Nucleophile in the catalytic mechanism. Residue histidine 445 is part of the active site.

The protein belongs to the CobB/CobQ family. CobQ subfamily.

It participates in cofactor biosynthesis; adenosylcobalamin biosynthesis. Functionally, catalyzes amidations at positions B, D, E, and G on adenosylcobyrinic A,C-diamide. NH(2) groups are provided by glutamine, and one molecule of ATP is hydrogenolyzed for each amidation. In Chlorobium chlorochromatii (strain CaD3), this protein is Cobyric acid synthase.